Consider the following 294-residue polypeptide: Cytidine deaminase (294 aa).

CMP/dCMP-type deaminase domains are found at residues 48–168 and 186–294; these read DEDA…FGPK and LTGD…VLLG. A substrate-binding site is contributed by 89–91; sequence NME. A Zn(2+)-binding site is contributed by H102. E104 serves as the catalytic Proton donor. C129 and C132 together coordinate Zn(2+).

This sequence belongs to the cytidine and deoxycytidylate deaminase family. As to quaternary structure, homodimer. Zn(2+) serves as cofactor.

It catalyses the reaction cytidine + H2O + H(+) = uridine + NH4(+). It carries out the reaction 2'-deoxycytidine + H2O + H(+) = 2'-deoxyuridine + NH4(+). Its function is as follows. This enzyme scavenges exogenous and endogenous cytidine and 2'-deoxycytidine for UMP synthesis. This Escherichia fergusonii (strain ATCC 35469 / DSM 13698 / CCUG 18766 / IAM 14443 / JCM 21226 / LMG 7866 / NBRC 102419 / NCTC 12128 / CDC 0568-73) protein is Cytidine deaminase.